Here is a 268-residue protein sequence, read N- to C-terminus: uncharacterized protein (268 aa).

This is an uncharacterized protein from Haemophilus influenzae (strain ATCC 51907 / DSM 11121 / KW20 / Rd).